The sequence spans 107 residues: Sperm protamine P1 (107 aa).

Composition is skewed to basic and acidic residues over residues 1–10 (ALRKVDRNRF) and 20–33 (REAK…EFPG). Positions 1–35 (ALRKVDRNRFVLDNVTPQPREAKRYKEEEEFPGHG) are cleaved as a propeptide — removed in mature form. The tract at residues 1–107 (ALRKVDRNRF…RRRRRGKKGK (107 aa)) is disordered. Residues 34 to 107 (HGRRRRRRSK…RRRRRGKKGK (74 aa)) show a composition bias toward basic residues. Position 42 is a phosphoserine (Ser-42).

In terms of processing, a series of N-terminal cleavages yield the mature protein. Post-translationally, only the mature protein is phosphorylated. Gonads.

It is found in the nucleus. Its subcellular location is the chromosome. Functionally, protamines substitute for histones in the chromatin of sperm during the haploid phase of spermatogenesis. They compact sperm DNA into a highly condensed, stable and inactive complex. The sequence is that of Sperm protamine P1 from Bolinus brandaris (Purple dye murex).